A 513-amino-acid polypeptide reads, in one-letter code: Sphingolipid C9-methyltransferase 1 (513 aa).

The next 2 membrane-spanning stretches (helical) occupy residues 63 to 83 and 85 to 105; these read FLVA…GGGL and TAIF…WTVM. Residues 228–229, 265–273, 291–296, and 321–322 contribute to the S-adenosyl-L-methionine site; these read YT, LLDIGCGWG, TLARNQ, and YR.

Belongs to the CFA/CMAS family.

It localises to the membrane. The catalysed reaction is a (4E,8E)-4-sphinga-4,8-dienine ceramide + S-adenosyl-L-methionine = a 9-methyl-(4E,8E)-sphinga-4,8-dienine ceramide + S-adenosyl-L-homocysteine + H(+). The protein operates within lipid metabolism; sphingolipid metabolism. Functionally, catalyzes methylation of the sphingoid base component of glucosylceramides (GluCers) at the C9-position. Sphingolipid C9-methylation requires 4,8-desaturated ceramides as substrates. Glucosylceramides play important roles in the growth, differentiation and pathogenicity. The methyl group at the C9-position distinguishes fungal glucosylceramides from those of plants and animals, and may thus play a role in host-pathogen interactions enabling the host to recognize the fungal attack and initiate specific defense responses. However, C-9 methylation of GlcCers is not essential for the sensitivity of F.graminearum to plant defensins MsDef1 and RsAFP2. This Gibberella zeae (strain ATCC MYA-4620 / CBS 123657 / FGSC 9075 / NRRL 31084 / PH-1) (Wheat head blight fungus) protein is Sphingolipid C9-methyltransferase 1.